We begin with the raw amino-acid sequence, 123 residues long: Large ribosomal subunit protein bL12 (123 aa).

The protein belongs to the bacterial ribosomal protein bL12 family. In terms of assembly, homodimer. Part of the ribosomal stalk of the 50S ribosomal subunit. Forms a multimeric L10(L12)X complex, where L10 forms an elongated spine to which 2 to 4 L12 dimers bind in a sequential fashion. Binds GTP-bound translation factors.

In terms of biological role, forms part of the ribosomal stalk which helps the ribosome interact with GTP-bound translation factors. Is thus essential for accurate translation. The protein is Large ribosomal subunit protein bL12 of Chlorobium luteolum (strain DSM 273 / BCRC 81028 / 2530) (Pelodictyon luteolum).